We begin with the raw amino-acid sequence, 362 residues long: Isopentenyl-diphosphate delta-isomerase (362 aa).

5-6 (RK) serves as a coordination point for substrate. FMN contacts are provided by residues 63–65 (AMT), Ser93, and Asn122. Gln152 serves as a coordination point for substrate. Glu153 is a binding site for Mg(2+). FMN-binding positions include Lys184, Thr214, 259–261 (GIR), and 280–281 (AG).

Belongs to the IPP isomerase type 2 family. Homooctamer. Dimer of tetramers. The cofactor is FMN. Requires NADPH as cofactor. Mg(2+) serves as cofactor.

Its subcellular location is the cytoplasm. It catalyses the reaction isopentenyl diphosphate = dimethylallyl diphosphate. Functionally, involved in the biosynthesis of isoprenoids. Catalyzes the 1,3-allylic rearrangement of the homoallylic substrate isopentenyl (IPP) to its allylic isomer, dimethylallyl diphosphate (DMAPP). The chain is Isopentenyl-diphosphate delta-isomerase from Nocardia farcinica (strain IFM 10152).